Consider the following 405-residue polypeptide: Phosphopentomutase (405 aa).

Positions 10, 303, 308, 344, 345, and 356 each coordinate Mn(2+).

It belongs to the phosphopentomutase family. The cofactor is Mn(2+).

Its subcellular location is the cytoplasm. It carries out the reaction 2-deoxy-alpha-D-ribose 1-phosphate = 2-deoxy-D-ribose 5-phosphate. The enzyme catalyses alpha-D-ribose 1-phosphate = D-ribose 5-phosphate. It functions in the pathway carbohydrate degradation; 2-deoxy-D-ribose 1-phosphate degradation; D-glyceraldehyde 3-phosphate and acetaldehyde from 2-deoxy-alpha-D-ribose 1-phosphate: step 1/2. Its function is as follows. Isomerase that catalyzes the conversion of deoxy-ribose 1-phosphate (dRib-1-P) and ribose 1-phosphate (Rib-1-P) to deoxy-ribose 5-phosphate (dRib-5-P) and ribose 5-phosphate (Rib-5-P), respectively. This is Phosphopentomutase from Shewanella loihica (strain ATCC BAA-1088 / PV-4).